A 269-amino-acid polypeptide reads, in one-letter code: Probable cysteine protease avirulence protein AvrPpiC2 (269 aa).

A disordered region spans residues 1–39 (MTIVSGHIGKHPSLTTVQAGSSASVENQMPDPAQFSDGR). Over residues 13–27 (SLTTVQAGSSASVEN) the composition is skewed to polar residues. Residues cysteine 72, histidine 213, and aspartate 230 contribute to the active site.

Belongs to the peptidase C58 family.

Functionally, potential cysteine protease. Avirulence protein, which may be essential during infection of plant cells from Pea and some Arabidopsis thaliana cultivars. May act by affecting the plant defense system. In plants lacking appropriate resistance (R) gene, it probably impairs the plant defense system and leads to the bacteria multiplication. In contrast, in plants containing the appropriate R protein, it is unable to induce disease symptoms, explaining its avirulence name. This is Probable cysteine protease avirulence protein AvrPpiC2 (avrPpiC2) from Pseudomonas syringae pv. pisi.